The chain runs to 238 residues: Small ribosomal subunit protein uS3 (238 aa).

The region spanning 39–107 (MREFIHDYAK…ELHLNIVEIR (69 aa)) is the KH type-2 domain. The segment covering 212-222 (PQAHDRRHSEA) has biased composition (basic and acidic residues). Positions 212-238 (PQAHDRRHSEAQEGAAPRPPRRDRERA) are disordered.

It belongs to the universal ribosomal protein uS3 family. As to quaternary structure, part of the 30S ribosomal subunit. Forms a tight complex with proteins S10 and S14.

Functionally, binds the lower part of the 30S subunit head. Binds mRNA in the 70S ribosome, positioning it for translation. The sequence is that of Small ribosomal subunit protein uS3 from Cereibacter sphaeroides (strain ATCC 17025 / ATH 2.4.3) (Rhodobacter sphaeroides).